The sequence spans 309 residues: Glutaminase (309 aa).

The substrate site is built by S65, N117, E162, N169, Y193, Y245, and V263.

It belongs to the glutaminase family. Homotetramer.

It catalyses the reaction L-glutamine + H2O = L-glutamate + NH4(+). The chain is Glutaminase from Shouchella clausii (strain KSM-K16) (Alkalihalobacillus clausii).